A 105-amino-acid polypeptide reads, in one-letter code: U7-hexatoxin-Hi1a (105 aa).

The first 23 residues, 1-23 (MKTILLFLGVCAVGASMMTGGWT), serve as a signal peptide directing secretion.

The protein belongs to the cystatin family. In terms of processing, contains 2 disulfide bonds. As to expression, expressed by the venom gland.

Its subcellular location is the secreted. Functionally, inhibits various C1 cysteine proteases. This protein has no toxic activity and its function in the venom is unknown. It may play a role as a housekeeping or regulatory protein. This is U7-hexatoxin-Hi1a from Hadronyche infensa (Fraser island funnel-web spider).